Reading from the N-terminus, the 408-residue chain is MQIPSKLKPYYENIAFEQEDSKMIINLGPQHPSAHGNLRLILELDGEQVVKARPCIGYMHRGMEKMAENMIYQEFIPTTDRMDYIAASANNYAYCAAVEKLCGLEIPRRAAVIRMILLELNRITSHLLWLATHALDIGAMSVFLYCFREREYVLDLIEKYCGARLTHSSMRIGGVMLDLPENYLEEMLAFCDKFPNDLKDYEDLLDDNRIWRLRTENVGVVTKEQALNWGCTGVMLRGSGIKYDIRKEEPYLLYNEVEFGVPYATQGDSYARYKVYMQEFRESLKILRQCAMLYKDTSPEILATHPEYVSASKEQILTQNYSLMQHFVLITQGLKPPKGEVYVPTESPKGELGFFIHSDGTERPYRLKARTPSYWHCAFFEEMLVGTYLADVVAIMGNVNIVLGEIDR.

The protein belongs to the complex I 49 kDa subunit family. In terms of assembly, NDH-1 is composed of 14 different subunits. Subunits NuoB, C, D, E, F, and G constitute the peripheral sector of the complex.

Its subcellular location is the cell inner membrane. It carries out the reaction a quinone + NADH + 5 H(+)(in) = a quinol + NAD(+) + 4 H(+)(out). Its function is as follows. NDH-1 shuttles electrons from NADH, via FMN and iron-sulfur (Fe-S) centers, to quinones in the respiratory chain. The immediate electron acceptor for the enzyme in this species is believed to be ubiquinone. Couples the redox reaction to proton translocation (for every two electrons transferred, four hydrogen ions are translocated across the cytoplasmic membrane), and thus conserves the redox energy in a proton gradient. In Campylobacter jejuni subsp. jejuni serotype O:23/36 (strain 81-176), this protein is NADH-quinone oxidoreductase subunit D.